A 175-amino-acid chain; its full sequence is E1B protein, small T-antigen (175 aa).

The interval 153–175 is disordered; sequence LAEEDEDEEGTTLTTEAEQESSA.

Belongs to the adenoviridae E1B 19 kDa protein family.

This chain is E1B protein, small T-antigen, found in Mus musculus (Mouse).